Here is a 188-residue protein sequence, read N- to C-terminus: Elongation factor P (188 aa).

Residue Lys-34 is modified to N6-(3,6-diaminohexanoyl)-5-hydroxylysine.

It belongs to the elongation factor P family. In terms of processing, may be beta-lysylated on the epsilon-amino group of Lys-34 by the combined action of EpmA and EpmB, and then hydroxylated on the C5 position of the same residue by EpmC (if this protein is present). Lysylation is critical for the stimulatory effect of EF-P on peptide-bond formation. The lysylation moiety may extend toward the peptidyltransferase center and stabilize the terminal 3-CCA end of the tRNA. Hydroxylation of the C5 position on Lys-34 may allow additional potential stabilizing hydrogen-bond interactions with the P-tRNA.

The protein resides in the cytoplasm. It participates in protein biosynthesis; polypeptide chain elongation. In terms of biological role, involved in peptide bond synthesis. Alleviates ribosome stalling that occurs when 3 or more consecutive Pro residues or the sequence PPG is present in a protein, possibly by augmenting the peptidyl transferase activity of the ribosome. Modification of Lys-34 is required for alleviation. This chain is Elongation factor P, found in Yersinia pseudotuberculosis serotype O:1b (strain IP 31758).